Consider the following 427-residue polypeptide: Histidine--tRNA ligase (427 aa).

The protein belongs to the class-II aminoacyl-tRNA synthetase family. Homodimer.

It is found in the cytoplasm. The catalysed reaction is tRNA(His) + L-histidine + ATP = L-histidyl-tRNA(His) + AMP + diphosphate + H(+). The sequence is that of Histidine--tRNA ligase (hisS) from Mycobacterium leprae (strain TN).